The primary structure comprises 276 residues: MPEMPEVETVRRTLLPLIKGKTIEKVVLWYPTIVATDHDEFLKELPGKKIIGIDRYAKYLLIRLSDNLTIVSHLRMEGKYHLTTEDAPKDKHDHVEFVFTDKTALRYNDVRKFGRMQLIITGTERQVTGIKKLGPEPNTSEFSQQYLIDNLKKKHKNIKNVLLDQTTVAGLGNIYVDETLWQSKIHPLSIANKIPAKKVAGLWENINQTIALAIEKRGTTVHSYLDANGEVGGYQEMLQVYGHVGEECPRCGNIFEKIKVSGRGTTFCPHCQVIYK.

The active-site Schiff-base intermediate with DNA is the P2. E3 serves as the catalytic Proton donor. The active-site Proton donor; for beta-elimination activity is K58. Residues H92, R111, and K154 each coordinate DNA. Residues 239–273 (QVYGHVGEECPRCGNIFEKIKVSGRGTTFCPHCQV) form an FPG-type zinc finger. The Proton donor; for delta-elimination activity role is filled by R263.

The protein belongs to the FPG family. Monomer. Zn(2+) is required as a cofactor.

The enzyme catalyses Hydrolysis of DNA containing ring-opened 7-methylguanine residues, releasing 2,6-diamino-4-hydroxy-5-(N-methyl)formamidopyrimidine.. The catalysed reaction is 2'-deoxyribonucleotide-(2'-deoxyribose 5'-phosphate)-2'-deoxyribonucleotide-DNA = a 3'-end 2'-deoxyribonucleotide-(2,3-dehydro-2,3-deoxyribose 5'-phosphate)-DNA + a 5'-end 5'-phospho-2'-deoxyribonucleoside-DNA + H(+). Its function is as follows. Involved in base excision repair of DNA damaged by oxidation or by mutagenic agents. Acts as a DNA glycosylase that recognizes and removes damaged bases. Has a preference for oxidized purines, such as 7,8-dihydro-8-oxoguanine (8-oxoG). Has AP (apurinic/apyrimidinic) lyase activity and introduces nicks in the DNA strand. Cleaves the DNA backbone by beta-delta elimination to generate a single-strand break at the site of the removed base with both 3'- and 5'-phosphates. This is Formamidopyrimidine-DNA glycosylase from Lactobacillus acidophilus (strain ATCC 700396 / NCK56 / N2 / NCFM).